Consider the following 185-residue polypeptide: Ribosome-recycling factor (185 aa).

Belongs to the RRF family.

It is found in the cytoplasm. Its function is as follows. Responsible for the release of ribosomes from messenger RNA at the termination of protein biosynthesis. May increase the efficiency of translation by recycling ribosomes from one round of translation to another. The protein is Ribosome-recycling factor of Clostridium beijerinckii (strain ATCC 51743 / NCIMB 8052) (Clostridium acetobutylicum).